A 404-amino-acid polypeptide reads, in one-letter code: Serine/threonine transporter SstT (404 aa).

9 helical membrane-spanning segments follow: residues isoleucine 17–isoleucine 37, phenylalanine 44–isoleucine 64, isoleucine 75–isoleucine 95, alanine 138–leucine 158, isoleucine 179–valine 199, leucine 212–leucine 232, isoleucine 287–leucine 307, phenylalanine 319–valine 339, and phenylalanine 354–isoleucine 374.

This sequence belongs to the dicarboxylate/amino acid:cation symporter (DAACS) (TC 2.A.23) family.

It is found in the cell membrane. The catalysed reaction is L-serine(in) + Na(+)(in) = L-serine(out) + Na(+)(out). It carries out the reaction L-threonine(in) + Na(+)(in) = L-threonine(out) + Na(+)(out). Its function is as follows. Involved in the import of serine and threonine into the cell, with the concomitant import of sodium (symport system). The protein is Serine/threonine transporter SstT of Streptococcus equi subsp. zooepidemicus (strain MGCS10565).